We begin with the raw amino-acid sequence, 738 residues long: MDGQDIGAGGGCPFSGANTNKGRRSNRDWWPNQLNLSILHQHQARQNPLGETFNYAEAFKSLDLDAVKKDLIALMTDSQDWWPADYGHYGGLMIRMAWHSAGTYRTADGRGGASTGTQRFAPLNSWPDNGNLDKARMLLWPIKKKYGNALSWADLMILAGNCAIESMGLKPFGFGGGRADVWEPEEDIYWGAEDEWLATSDHAQARYSGDRVLEDPLAAVQMGLIYVNPEGPDGNPDPIASGRDIRETFARMAMNDEETVALTAGGHTFGKAHGNGPVDAVGPEPEAAPIEAMGQGWLSSHKSGKGVDTITSGIEGAWTPNPIQWDMGYFDVLFGYDWELTKSPAGAWIWHAKDLKEDDHAPEVDGSGKKVPIMMTTADMAMKMDPIYGPISKRFHENPEEFAEAFKRAWFKLTHRDMGPKACYLGADVPDEDLIWQDPLPAVDHALIEEADIASLKADILASGLSVQDLVYVAWSSASTFRGSDKRGGANGARIRLAPQKDWEVNEPAKLEKVLNALEGIQSSFNAAASGGKKVSLADLIVLAGSAAVEKAAKDAGFDVTVPFTPGRTDATDEQTDVESFDVMEPQIDGFRNYAPKKFSVSTEEMLVDKAQLLTLSAPEMTVLVGGLRAIGANYGDSAHGVLTSRKGQLTNDFFVNVLDLGTKWTATDDSGEIFEGADRATGEVKWTGTRADLIFGSNSQLRALSEVYAQDDNAGKMVADFVKAWVKVMELDRFDLK.

The span at Met1–Pro13 shows a compositional bias: gly residues. The tract at residues Met1–Asn26 is disordered. The tryptophyl-tyrosyl-methioninium (Trp-Tyr) (with M-252) cross-link spans Trp98 to Tyr226. The active-site Proton acceptor is His99. Residues Tyr226 to Met252 constitute a cross-link (tryptophyl-tyrosyl-methioninium (Tyr-Met) (with W-98)). Position 267 (His267) interacts with heme b.

Belongs to the peroxidase family. Peroxidase/catalase subfamily. Homodimer or homotetramer. Requires heme b as cofactor. In terms of processing, formation of the three residue Trp-Tyr-Met cross-link is important for the catalase, but not the peroxidase activity of the enzyme.

The enzyme catalyses H2O2 + AH2 = A + 2 H2O. It catalyses the reaction 2 H2O2 = O2 + 2 H2O. In terms of biological role, bifunctional enzyme with both catalase and broad-spectrum peroxidase activity. The chain is Catalase-peroxidase from Ruegeria sp. (strain TM1040) (Silicibacter sp.).